The following is a 263-amino-acid chain: 4-hydroxy-tetrahydrodipicolinate reductase (263 aa).

Residues 7 to 12 (GASGRM) and Asp33 contribute to the NAD(+) site. Residue Arg34 participates in NADP(+) binding. NAD(+) is bound by residues 96–98 (GTT) and 120–123 (APNM). Catalysis depends on His153, which acts as the Proton donor/acceptor. His154 lines the (S)-2,3,4,5-tetrahydrodipicolinate pocket. Lys157 functions as the Proton donor in the catalytic mechanism. 163–164 (GT) is a binding site for (S)-2,3,4,5-tetrahydrodipicolinate.

The protein belongs to the DapB family.

Its subcellular location is the cytoplasm. The catalysed reaction is (S)-2,3,4,5-tetrahydrodipicolinate + NAD(+) + H2O = (2S,4S)-4-hydroxy-2,3,4,5-tetrahydrodipicolinate + NADH + H(+). The enzyme catalyses (S)-2,3,4,5-tetrahydrodipicolinate + NADP(+) + H2O = (2S,4S)-4-hydroxy-2,3,4,5-tetrahydrodipicolinate + NADPH + H(+). It participates in amino-acid biosynthesis; L-lysine biosynthesis via DAP pathway; (S)-tetrahydrodipicolinate from L-aspartate: step 4/4. Functionally, catalyzes the conversion of 4-hydroxy-tetrahydrodipicolinate (HTPA) to tetrahydrodipicolinate. This chain is 4-hydroxy-tetrahydrodipicolinate reductase, found in Ralstonia pickettii (strain 12J).